The following is a 420-amino-acid chain: MDRFIIHGGHRLRGDIVIGGAKNAALKLLVAGLLTSERLVLRNVPRIADITTMRRLLEQHGVTVEDLEGDGGTLAVGGTITNTEAPYDIVSQMRASILVLGPLLARCGEARVSLPGGCAIGTRPVDMHLKGLEALGAEISLENGYINARAPRGLVGERIILPFASVGATENLLMASCLARGRTEIINAAREPEIADLVACLNGMGARITGTGTGSLAIEGVEALHGTTHRVMPDRIECGTYACAAGITGGELRLIGGRADHLGAVVRALEEAGVEVFQEDDALRVRRTGALRGVDIMTEPYPGFPTDMQAQFMALLSVAEGASMVTETIFENRFMHVPELNRMGARINVHGSSAIIRGVHSLSGAPVMATDLRASFSLILAGLAAHGETILSRVYHLDRGYEAVEQKLARCGAQIERVRE.

Phosphoenolpyruvate is bound at residue Lys-22–Asn-23. Arg-94 lines the UDP-N-acetyl-alpha-D-glucosamine pocket. The active-site Proton donor is Cys-118. Cys-118 carries the post-translational modification 2-(S-cysteinyl)pyruvic acid O-phosphothioketal. Residues Asp-307 and Ile-329 each contribute to the UDP-N-acetyl-alpha-D-glucosamine site.

Belongs to the EPSP synthase family. MurA subfamily.

Its subcellular location is the cytoplasm. It carries out the reaction phosphoenolpyruvate + UDP-N-acetyl-alpha-D-glucosamine = UDP-N-acetyl-3-O-(1-carboxyvinyl)-alpha-D-glucosamine + phosphate. Its pathway is cell wall biogenesis; peptidoglycan biosynthesis. Functionally, cell wall formation. Adds enolpyruvyl to UDP-N-acetylglucosamine. This chain is UDP-N-acetylglucosamine 1-carboxyvinyltransferase, found in Gluconacetobacter diazotrophicus (strain ATCC 49037 / DSM 5601 / CCUG 37298 / CIP 103539 / LMG 7603 / PAl5).